We begin with the raw amino-acid sequence, 547 residues long: Chaperonin GroEL (547 aa).

ATP-binding positions include 30 to 33, Lys51, 87 to 91, Gly415, and Asp496; these read TLGP and DGTTT. Residues 527–547 form a disordered region; it reads SDKAEPMPMRGGMGGMGGMDF. A compositionally biased stretch (gly residues) spans 537–547; that stretch reads GGMGGMGGMDF.

The protein belongs to the chaperonin (HSP60) family. In terms of assembly, forms a cylinder of 14 subunits composed of two heptameric rings stacked back-to-back. Interacts with the co-chaperonin GroES.

The protein localises to the cytoplasm. The enzyme catalyses ATP + H2O + a folded polypeptide = ADP + phosphate + an unfolded polypeptide.. Together with its co-chaperonin GroES, plays an essential role in assisting protein folding. The GroEL-GroES system forms a nano-cage that allows encapsulation of the non-native substrate proteins and provides a physical environment optimized to promote and accelerate protein folding. The protein is Chaperonin GroEL of Rickettsia africae (strain ESF-5).